We begin with the raw amino-acid sequence, 256 residues long: MNDIWWQTEGQGNCHLVLLHGWGLNAEVWNCIREELSAHFTLHLVDLPGFGRSQGFGAMSLEQMAKHVLKQAPDKAVWLGWSLGGLVASQVALTHPERVQALVTVASSPCFSAREAWPGIKPDILAGFQQQLSEDFQRTVERFLALQTLGTETARQDARTLKSAVLALPMPEVAVLNGGLEILKTADLREPLKSLTMPFLRLYGYLDGLVPRKVVPMLDAAWPESESQVFAKAAHAPFISHPGEFCQALMALKQKI.

Positions 15 to 242 (HLVLLHGWGL…AAHAPFISHP (228 aa)) constitute an AB hydrolase-1 domain. Substrate contacts are provided by residues Trp-22, 82–83 (SL), and 143–147 (FLALQ). Residue Ser-82 is the Nucleophile of the active site. Catalysis depends on residues Asp-207 and His-235. His-235 contacts substrate.

Belongs to the AB hydrolase superfamily. Carboxylesterase BioH family. In terms of assembly, monomer.

It is found in the cytoplasm. The catalysed reaction is 6-carboxyhexanoyl-[ACP] methyl ester + H2O = 6-carboxyhexanoyl-[ACP] + methanol + H(+). Its pathway is cofactor biosynthesis; biotin biosynthesis. The physiological role of BioH is to remove the methyl group introduced by BioC when the pimeloyl moiety is complete. It allows to synthesize pimeloyl-ACP via the fatty acid synthetic pathway through the hydrolysis of the ester bonds of pimeloyl-ACP esters. This chain is Pimeloyl-[acyl-carrier protein] methyl ester esterase, found in Citrobacter koseri (strain ATCC BAA-895 / CDC 4225-83 / SGSC4696).